The sequence spans 283 residues: Release factor glutamine methyltransferase (283 aa).

2 residues coordinate S-adenosyl-L-methionine: aspartate 143 and asparagine 189. Residue 189–192 (NPPY) participates in substrate binding.

This sequence belongs to the protein N5-glutamine methyltransferase family. PrmC subfamily.

The catalysed reaction is L-glutaminyl-[peptide chain release factor] + S-adenosyl-L-methionine = N(5)-methyl-L-glutaminyl-[peptide chain release factor] + S-adenosyl-L-homocysteine + H(+). Methylates the class 1 translation termination release factors RF1/PrfA and RF2/PrfB on the glutamine residue of the universally conserved GGQ motif. In Clostridium botulinum (strain Hall / ATCC 3502 / NCTC 13319 / Type A), this protein is Release factor glutamine methyltransferase.